Consider the following 610-residue polypeptide: tRNA uridine 5-carboxymethylaminomethyl modification enzyme MnmG (610 aa).

Gly14–Gly19 serves as a coordination point for FAD. Gly274–Phe288 contacts NAD(+).

This sequence belongs to the MnmG family. Homodimer. Heterotetramer of two MnmE and two MnmG subunits. FAD serves as cofactor.

The protein localises to the cytoplasm. NAD-binding protein involved in the addition of a carboxymethylaminomethyl (cmnm) group at the wobble position (U34) of certain tRNAs, forming tRNA-cmnm(5)s(2)U34. This chain is tRNA uridine 5-carboxymethylaminomethyl modification enzyme MnmG, found in Chlamydia muridarum (strain MoPn / Nigg).